A 138-amino-acid polypeptide reads, in one-letter code: Lutropin subunit beta (138 aa).

The signal sequence occupies residues 1 to 17 (LQGLLLWLLLSVGGVWA). Cystine bridges form between C26–C74, C40–C89, C43–C127, C51–C105, C55–C107, and C110–C117. N-linked (GlcNAc...) asparagine glycosylation occurs at N30.

This sequence belongs to the glycoprotein hormones subunit beta family. In terms of assembly, heterodimer of a common alpha chain and a unique beta chain which confers biological specificity to thyrotropin, lutropin, follitropin and gonadotropin.

The protein resides in the secreted. In terms of biological role, promotes spermatogenesis and ovulation by stimulating the testes and ovaries to synthesize steroids. This Canis lupus familiaris (Dog) protein is Lutropin subunit beta (LHB).